Reading from the N-terminus, the 86-residue chain is UPF0335 protein mll3968 (86 aa).

It belongs to the UPF0335 family.

This Mesorhizobium japonicum (strain LMG 29417 / CECT 9101 / MAFF 303099) (Mesorhizobium loti (strain MAFF 303099)) protein is UPF0335 protein mll3968.